Here is a 365-residue protein sequence, read N- to C-terminus: uncharacterized protein (365 aa).

A coiled-coil region spans residues 18–46; that stretch reads TAQEALTLIEKLDSDYKEKEEKITALSVH.

This is an uncharacterized protein from Bacillus subtilis (strain 168).